Consider the following 597-residue polypeptide: Proline--tRNA ligase (597 aa).

It belongs to the class-II aminoacyl-tRNA synthetase family. ProS type 1 subfamily. Homodimer.

It is found in the cytoplasm. It carries out the reaction tRNA(Pro) + L-proline + ATP = L-prolyl-tRNA(Pro) + AMP + diphosphate. In terms of biological role, catalyzes the attachment of proline to tRNA(Pro) in a two-step reaction: proline is first activated by ATP to form Pro-AMP and then transferred to the acceptor end of tRNA(Pro). As ProRS can inadvertently accommodate and process non-cognate amino acids such as alanine and cysteine, to avoid such errors it has two additional distinct editing activities against alanine. One activity is designated as 'pretransfer' editing and involves the tRNA(Pro)-independent hydrolysis of activated Ala-AMP. The other activity is designated 'posttransfer' editing and involves deacylation of mischarged Ala-tRNA(Pro). The misacylated Cys-tRNA(Pro) is not edited by ProRS. This chain is Proline--tRNA ligase, found in Bifidobacterium longum (strain NCC 2705).